Consider the following 87-residue polypeptide: Chromosomal protein MC1b (87 aa).

Its function is as follows. Protects DNA against thermal denaturation and modulates transcription. This chain is Chromosomal protein MC1b, found in Methanothrix soehngenii (Methanosaeta concilii).